The primary structure comprises 169 residues: Probable inosine/xanthosine triphosphatase (169 aa).

Asp-58 lines the Mg(2+) pocket.

It belongs to the YjjX NTPase family. In terms of assembly, homodimer. Mg(2+) serves as cofactor. Requires Mn(2+) as cofactor.

The enzyme catalyses XTP + H2O = XDP + phosphate + H(+). It catalyses the reaction ITP + H2O = IDP + phosphate + H(+). Phosphatase that hydrolyzes non-canonical purine nucleotides such as XTP and ITP to their respective diphosphate derivatives. Probably excludes non-canonical purines from DNA/RNA precursor pool, thus preventing their incorporation into DNA/RNA and avoiding chromosomal lesions. The chain is Probable inosine/xanthosine triphosphatase from Archaeoglobus fulgidus (strain ATCC 49558 / DSM 4304 / JCM 9628 / NBRC 100126 / VC-16).